A 143-amino-acid polypeptide reads, in one-letter code: Ribosome maturation factor RimP (143 aa).

The protein belongs to the RimP family.

It localises to the cytoplasm. Its function is as follows. Required for maturation of 30S ribosomal subunits. This is Ribosome maturation factor RimP from Nitrosomonas eutropha (strain DSM 101675 / C91 / Nm57).